We begin with the raw amino-acid sequence, 438 residues long: MNTRLALVLCAVGSGVLSFSCARTAEPTPAASTHVPVTTAGALSVTPPSSTDRWYQFSRTDGRVHLRACPAPSQPSAPEHFVPWTEAVRLSAVDAQQELLLINRAGVLPATQLARMQTAPVPRKAPSTPAAETTSLTLTPPALLATQSAEGFYSEPIPNSSPHPCQGTGAVFVRLYTDPLFTTSPQDSAAPFLVRYDVRTARWTSVAYTRALGLPRNAQCTALTHTRGTWYASFKSSEAERVSFAYFSFPSLSSLENLGPTQRREHPIGGKVQVPRPISAAAFRAACTPQRLHLPTASTSSDHHSDLHELLVHRLLARVPLSPLYLSARSPCWASDRSFLKTAHRTADERAHHANALIFHPPRARLSAALLTDSGHLYFVREDGSEGHARLSALPPQFVYTSFTLSGPSLIAGWEEQDFFQVGSTGLLCTEVESLTGT.

A signal peptide spans 1–20 (MNTRLALVLCAVGSGVLSFS). A lipid anchor (N-palmitoyl cysteine) is attached at C21. The S-diacylglycerol cysteine moiety is linked to residue C21.

The protein localises to the cell membrane. This is an uncharacterized protein from Treponema pallidum (strain Nichols).